A 78-amino-acid chain; its full sequence is Large ribosomal subunit protein uL24 (78 aa).

The protein belongs to the universal ribosomal protein uL24 family. Part of the 50S ribosomal subunit.

Its function is as follows. One of two assembly initiator proteins, it binds directly to the 5'-end of the 23S rRNA, where it nucleates assembly of the 50S subunit. In terms of biological role, one of the proteins that surrounds the polypeptide exit tunnel on the outside of the subunit. The chain is Large ribosomal subunit protein uL24 from Campylobacter curvus (strain 525.92).